The sequence spans 313 residues: Ribosomal protein L11 methyltransferase (313 aa).

Residues Thr-164, Gly-185, Asp-207, and Asn-249 each contribute to the S-adenosyl-L-methionine site.

Belongs to the methyltransferase superfamily. PrmA family.

It localises to the cytoplasm. The catalysed reaction is L-lysyl-[protein] + 3 S-adenosyl-L-methionine = N(6),N(6),N(6)-trimethyl-L-lysyl-[protein] + 3 S-adenosyl-L-homocysteine + 3 H(+). Methylates ribosomal protein L11. The polypeptide is Ribosomal protein L11 methyltransferase (Clostridium perfringens (strain ATCC 13124 / DSM 756 / JCM 1290 / NCIMB 6125 / NCTC 8237 / Type A)).